Reading from the N-terminus, the 164-residue chain is Transcription factor E (164 aa).

The HTH TFE/IIEalpha-type domain maps to 5 to 87 (NDKVIRGYLR…LWHLDFSDIE (83 aa)).

It belongs to the TFE family. Monomer. Interaction with RNA polymerase subunits RpoF and RpoE is necessary for Tfe stimulatory transcription activity. Able to interact with Tbp and RNA polymerase in the absence of DNA promoter. Interacts both with the preinitiation and elongation complexes.

Functionally, transcription factor that plays a role in the activation of archaeal genes transcribed by RNA polymerase. Facilitates transcription initiation by enhancing TATA-box recognition by TATA-box-binding protein (Tbp), and transcription factor B (Tfb) and RNA polymerase recruitment. Not absolutely required for transcription in vitro, but particularly important in cases where Tbp or Tfb function is not optimal. It dynamically alters the nucleic acid-binding properties of RNA polymerases by stabilizing the initiation complex and destabilizing elongation complexes. Seems to translocate with the RNA polymerase following initiation and acts by binding to the non template strand of the transcription bubble in elongation complexes. The sequence is that of Transcription factor E from Methanosarcina mazei (strain ATCC BAA-159 / DSM 3647 / Goe1 / Go1 / JCM 11833 / OCM 88) (Methanosarcina frisia).